The primary structure comprises 176 residues: Epididymal-specific lipocalin-9 (176 aa).

The signal sequence occupies residues 1 to 15; the sequence is MALLLLSLGLSLIAA. N-linked (GlcNAc...) asparagine glycosylation is found at Asn68 and Asn129. Cys83 and Cys161 are disulfide-bonded.

It belongs to the calycin superfamily. Lipocalin family.

It localises to the secreted. The polypeptide is Epididymal-specific lipocalin-9 (Homo sapiens (Human)).